Here is a 318-residue protein sequence, read N- to C-terminus: NADH-ubiquinone oxidoreductase chain 1 (318 aa).

The next 8 membrane-spanning stretches (helical) occupy residues 2 to 22 (FMVN…FLTL), 76 to 96 (TLAL…HPLI), 98 to 118 (FNLG…SILW), 140 to 160 (ISYE…SGSF), 171 to 191 (HSWL…STLA), 217 to 237 (AGSF…MNAL), 253 to 273 (ELYT…FLWI), and 294 to 314 (LPLT…TSGI).

It belongs to the complex I subunit 1 family. As to quaternary structure, core subunit of respiratory chain NADH dehydrogenase (Complex I) which is composed of 45 different subunits.

The protein localises to the mitochondrion inner membrane. The enzyme catalyses a ubiquinone + NADH + 5 H(+)(in) = a ubiquinol + NAD(+) + 4 H(+)(out). In terms of biological role, core subunit of the mitochondrial membrane respiratory chain NADH dehydrogenase (Complex I) which catalyzes electron transfer from NADH through the respiratory chain, using ubiquinone as an electron acceptor. Essential for the catalytic activity and assembly of complex I. This chain is NADH-ubiquinone oxidoreductase chain 1 (MT-ND1), found in Ateles paniscus (Black spider monkey).